Reading from the N-terminus, the 329-residue chain is VSG expression site-associated protein 221A (329 aa).

Residues 1–23 (MKVEIVELVVLLFSVTCVDAWLQ) form the signal peptide. Asn-73, Asn-294, and Asn-308 each carry an N-linked (GlcNAc...) asparagine glycan.

Not known but may be related to activation of the variant surface glycoprotein genes. This Trypanosoma brucei brucei protein is VSG expression site-associated protein 221A.